The chain runs to 476 residues: MAIRIYNTLTRQKEEFKPLHEGEVRMYVCGPTVYDYPHLGHARTYIAFDVIRRYLEHKGYTVLMVMNFTDIDDKIIKRANETGEDPKELAEKFLRIFLEDMKALKVKPADIYPRVTEHMQDIISFIKKLQEKGYAYEGSDGVYFEVRKFKDYGKLSKIKLEDLVKGARVEPGEGKRNPEDFALWKKAKPGEPKWESPWGEGRPGWHIECSTMSSKYLGESFDIHGGGNDLIFPHHENEIAQSEACFGHEWVHYWMHTGFLMVNGEKMSKSLGNFVTVRELLKRYNPEVIRLFVLQRHYRSPLDYSEEGIEHAKNNLERLYNTLENIRVAMSKAEISFRWDEPEFRAYEAIRDARKKFYEAMDDDFNTAEALKAVFEVSNAINRYLTEVEKPKESILRKAWEFFKDVGEVFGLFEDYFKEQKAENDEELINLLVEVRAQLRKEKKFDLADKIREELRKLGIQLEDTPQGTVWKRIKV.

Zn(2+) is bound at residue cysteine 29. Residues 31-41 carry the 'HIGH' region motif; that stretch reads PTVYDYPHLGH. Zn(2+) contacts are provided by cysteine 209, histidine 234, and glutamate 238. The short motif at 266-270 is the 'KMSKS' region element; sequence KMSKS. Lysine 269 provides a ligand contact to ATP.

The protein belongs to the class-I aminoacyl-tRNA synthetase family. It depends on Zn(2+) as a cofactor.

Its subcellular location is the cytoplasm. It carries out the reaction tRNA(Cys) + L-cysteine + ATP = L-cysteinyl-tRNA(Cys) + AMP + diphosphate. This Thermococcus gammatolerans (strain DSM 15229 / JCM 11827 / EJ3) protein is Cysteine--tRNA ligase.